A 799-amino-acid polypeptide reads, in one-letter code: E3 UFM1-protein ligase 1 homolog (799 aa).

Residues 429 to 483 (TTTTTTTQPSKKKDNLINSDDDDNQDNNKKSSKGKNKKSKQQQSSIQKLINDSED) form a disordered region. Over residues 458 to 468 (KSSKGKNKKSK) the composition is skewed to basic residues. Positions 469–478 (QQQSSIQKLI) are enriched in low complexity.

Belongs to the UFL1 family.

Functionally, E3 UFM1-protein ligase that mediates ufmylation of target proteins. This chain is E3 UFM1-protein ligase 1 homolog, found in Dictyostelium discoideum (Social amoeba).